The primary structure comprises 131 residues: Peptide methionine sulfoxide reductase MsrB (131 aa).

The MsrB domain maps to 8–130; the sequence is LEEWKEMLDP…NSVCLDLVPR (123 aa). Residues Cys-47, Cys-50, Cys-96, and Cys-99 each coordinate Zn(2+). The active-site Nucleophile is the Cys-119.

It belongs to the MsrB Met sulfoxide reductase family. Requires Zn(2+) as cofactor.

The catalysed reaction is L-methionyl-[protein] + [thioredoxin]-disulfide + H2O = L-methionyl-(R)-S-oxide-[protein] + [thioredoxin]-dithiol. The polypeptide is Peptide methionine sulfoxide reductase MsrB (Pseudomonas savastanoi pv. phaseolicola (strain 1448A / Race 6) (Pseudomonas syringae pv. phaseolicola (strain 1448A / Race 6))).